We begin with the raw amino-acid sequence, 389 residues long: uncharacterized protein (389 aa).

The protein belongs to the mimivirus L17x/L18x family.

This is an uncharacterized protein from Acanthamoeba polyphaga mimivirus (APMV).